Reading from the N-terminus, the 90-residue chain is MARVTVQDAVEKIGNRFDLVLISSRRARQMQTGGKDALVPEENDKTTVIALREIEEGLITKELLDARERQEQQEQDAAELAAVSSITHNR.

The interval 69 to 90 (RQEQQEQDAAELAAVSSITHNR) is disordered.

It belongs to the RNA polymerase subunit omega family. In terms of assembly, the RNAP catalytic core consists of 2 alpha, 1 beta, 1 beta' and 1 omega subunit. When a sigma factor is associated with the core the holoenzyme is formed, which can initiate transcription.

It carries out the reaction RNA(n) + a ribonucleoside 5'-triphosphate = RNA(n+1) + diphosphate. In terms of biological role, promotes RNA polymerase assembly. Latches the N- and C-terminal regions of the beta' subunit thereby facilitating its interaction with the beta and alpha subunits. This is DNA-directed RNA polymerase subunit omega from Aliivibrio fischeri (strain ATCC 700601 / ES114) (Vibrio fischeri).